The sequence spans 659 residues: Threonine--tRNA ligase (659 aa).

In terms of domain architecture, TGS spans 7–70 (VQATVTVTFP…TDDATVEIIT (64 aa)). A catalytic region spans residues 255-557 (DHRKLGAELE…LIEHTAGNFP (303 aa)). Residues C353, H404, and H534 each coordinate Zn(2+).

It belongs to the class-II aminoacyl-tRNA synthetase family. Homodimer. Zn(2+) serves as cofactor.

Its subcellular location is the cytoplasm. It catalyses the reaction tRNA(Thr) + L-threonine + ATP = L-threonyl-tRNA(Thr) + AMP + diphosphate + H(+). Catalyzes the attachment of threonine to tRNA(Thr) in a two-step reaction: L-threonine is first activated by ATP to form Thr-AMP and then transferred to the acceptor end of tRNA(Thr). Also edits incorrectly charged L-seryl-tRNA(Thr). The protein is Threonine--tRNA ligase of Chlorobium phaeobacteroides (strain BS1).